The primary structure comprises 162 residues: Lipoprotein signal peptidase (162 aa).

Helical transmembrane passes span 9-29 (LCLV…LVAT), 39-59 (VIHG…FGLF), 66-86 (VRKF…LWLY), and 95-115 (VLSF…IDRF). Active-site residues include Asp122 and Asp140. Residues 136 to 156 (FNVADSAITIGMVVFVYHVIF) traverse the membrane as a helical segment.

This sequence belongs to the peptidase A8 family.

Its subcellular location is the cell inner membrane. The enzyme catalyses Release of signal peptides from bacterial membrane prolipoproteins. Hydrolyzes -Xaa-Yaa-Zaa-|-(S,diacylglyceryl)Cys-, in which Xaa is hydrophobic (preferably Leu), and Yaa (Ala or Ser) and Zaa (Gly or Ala) have small, neutral side chains.. Its pathway is protein modification; lipoprotein biosynthesis (signal peptide cleavage). Functionally, this protein specifically catalyzes the removal of signal peptides from prolipoproteins. The polypeptide is Lipoprotein signal peptidase (Desulforapulum autotrophicum (strain ATCC 43914 / DSM 3382 / VKM B-1955 / HRM2) (Desulfobacterium autotrophicum)).